A 479-amino-acid chain; its full sequence is Proline--tRNA ligase (479 aa).

Belongs to the class-II aminoacyl-tRNA synthetase family. ProS type 3 subfamily. Homodimer.

The protein localises to the cytoplasm. It carries out the reaction tRNA(Pro) + L-proline + ATP = L-prolyl-tRNA(Pro) + AMP + diphosphate. Functionally, catalyzes the attachment of proline to tRNA(Pro) in a two-step reaction: proline is first activated by ATP to form Pro-AMP and then transferred to the acceptor end of tRNA(Pro). In Lachnospira eligens (strain ATCC 27750 / DSM 3376 / VPI C15-48 / C15-B4) (Eubacterium eligens), this protein is Proline--tRNA ligase.